We begin with the raw amino-acid sequence, 701 residues long: Rab-like protein 6 (701 aa).

Methionine 1 is modified (N-acetylmethionine). The tract at residues 39–279 (GVQYNMKIVI…IFLEMMEARS (241 aa)) is small GTPase-like. GTP contacts are provided by residues 50–57 (GDRNTGKT), 100–104 (DVVDK), and 177–179 (YRD). A disordered region spans residues 279–701 (SRGHASPLTT…LRGGGDYEAL (423 aa)). Positions 284–315 (SPLTTSGQSPSSGSQSPVVPPSTVSTGSSSPS) are enriched in low complexity. The segment covering 316–344 (TPQPVLQPPLQAPPAPPAPAEAPPLPAAP) has biased composition (pro residues). 5 positions are modified to phosphoserine: serine 394, serine 416, serine 418, serine 461, and serine 462. Positions 495 to 506 (ALGPPRDAAPRA) are enriched in low complexity. The residue at position 552 (serine 552) is a Phosphoserine. The span at 555 to 569 (DAQRRAGEFPVREDL) shows a compositional bias: basic and acidic residues. A Phosphoserine modification is found at serine 570. Position 573 is a phosphothreonine (threonine 573). Pro residues predominate over residues 580 to 589 (VQPPAPPKPL). A compositionally biased stretch (basic and acidic residues) spans 608-626 (EPGREDSSEQDKEGRPPAK). Phosphoserine is present on residues serine 614 and serine 615. Positions 629-667 (KKKKKKGREEEDKAAKKRSKHKKSRERADDKGRDERRRR) are interaction with CDKN2A. Basic residues predominate over residues 643–653 (AKKRSKHKKSR). A compositionally biased stretch (basic and acidic residues) spans 654-665 (ERADDKGRDERR). Residues 683–701 (LGGGAPSGPLRGGGDYEAL) are compositionally biased toward gly residues.

Belongs to the small GTPase superfamily. Rab family.

Its subcellular location is the nucleus. It localises to the cytoplasm. May enhance cellular proliferation. May reduce growth inhibitory activity of CDKN2A. The chain is Rab-like protein 6 (RABL6) from Bos taurus (Bovine).